The following is a 359-amino-acid chain: tRNA-specific 2-thiouridylase MnmA (359 aa).

ATP-binding positions include 9–16 and Met35; that span reads GISGGVDS. Residues 95-97 form an interaction with target base in tRNA region; that stretch reads NPD. The Nucleophile role is filled by Cys100. Cys100 and Cys197 are disulfide-bonded. Gly124 contributes to the ATP binding site. Positions 147-149 are interaction with tRNA; that stretch reads KDQ. Cys197 (cysteine persulfide intermediate) is an active-site residue. An interaction with tRNA region spans residues 309–310; the sequence is RY.

Belongs to the MnmA/TRMU family.

The protein resides in the cytoplasm. It carries out the reaction S-sulfanyl-L-cysteinyl-[protein] + uridine(34) in tRNA + AH2 + ATP = 2-thiouridine(34) in tRNA + L-cysteinyl-[protein] + A + AMP + diphosphate + H(+). Functionally, catalyzes the 2-thiolation of uridine at the wobble position (U34) of tRNA, leading to the formation of s(2)U34. The sequence is that of tRNA-specific 2-thiouridylase MnmA from Francisella tularensis subsp. tularensis (strain WY96-3418).